We begin with the raw amino-acid sequence, 578 residues long: Sulfite reductase [NADPH] hemoprotein beta-component (578 aa).

Polar residues predominate over residues 1–11 (MSANQQSNSQE). The tract at residues 1–20 (MSANQQSNSQEVLGEVLGPL) is disordered. Positions 441, 447, 487, and 491 each coordinate [4Fe-4S] cluster. C491 contributes to the siroheme binding site.

The protein belongs to the nitrite and sulfite reductase 4Fe-4S domain family. Alpha(8)-beta(8). The alpha component is a flavoprotein, the beta component is a hemoprotein. The cofactor is siroheme. Requires [4Fe-4S] cluster as cofactor.

The enzyme catalyses hydrogen sulfide + 3 NADP(+) + 3 H2O = sulfite + 3 NADPH + 4 H(+). It functions in the pathway sulfur metabolism; hydrogen sulfide biosynthesis; hydrogen sulfide from sulfite (NADPH route): step 1/1. In terms of biological role, component of the sulfite reductase complex that catalyzes the 6-electron reduction of sulfite to sulfide. This is one of several activities required for the biosynthesis of L-cysteine from sulfate. The chain is Sulfite reductase [NADPH] hemoprotein beta-component from Vibrio campbellii (strain ATCC BAA-1116).